Reading from the N-terminus, the 302-residue chain is Sulfate adenylyltransferase subunit 2 (302 aa).

It belongs to the PAPS reductase family. CysD subfamily. In terms of assembly, heterodimer composed of CysD, the smaller subunit, and CysN.

It catalyses the reaction sulfate + ATP + H(+) = adenosine 5'-phosphosulfate + diphosphate. The protein operates within sulfur metabolism; hydrogen sulfide biosynthesis; sulfite from sulfate: step 1/3. With CysN forms the ATP sulfurylase (ATPS) that catalyzes the adenylation of sulfate producing adenosine 5'-phosphosulfate (APS) and diphosphate, the first enzymatic step in sulfur assimilation pathway. APS synthesis involves the formation of a high-energy phosphoric-sulfuric acid anhydride bond driven by GTP hydrolysis by CysN coupled to ATP hydrolysis by CysD. This chain is Sulfate adenylyltransferase subunit 2, found in Citrobacter koseri (strain ATCC BAA-895 / CDC 4225-83 / SGSC4696).